The primary structure comprises 156 residues: Endoribonuclease YbeY (156 aa).

Zn(2+) contacts are provided by His-122, His-126, and His-132.

Belongs to the endoribonuclease YbeY family. The cofactor is Zn(2+).

The protein localises to the cytoplasm. Its function is as follows. Single strand-specific metallo-endoribonuclease involved in late-stage 70S ribosome quality control and in maturation of the 3' terminus of the 16S rRNA. This Pediococcus pentosaceus (strain ATCC 25745 / CCUG 21536 / LMG 10740 / 183-1w) protein is Endoribonuclease YbeY.